The sequence spans 328 residues: Protein phosphatase 1 regulatory inhibitor subunit PPP1R7 homolog (328 aa).

13 LRR repeats span residues 13–36 (IGDS…VELP), 37–59 (PNLI…IAQL), 61–82 (TLKK…PLSH), 86–110 (LSDL…IFTK), 111–130 (LLVY…ISKA), 131–153 (SSTL…IEHL), 154–177 (HNLQ…NFTK), 179–196 (EELW…LCGL), 197–221 (KCIK…CVAL), 223–240 (ELYL…LSAL), 241–264 (VNLR…NLTK), 266–287 (EDLW…AVTG), and 289–312 (KEKL…VAAV).

In terms of assembly, interacts with human protein phosphatase PPP1C.

Inhibitor of protein-phosphatase 1 (PP1). Binds to and inhibits PP1 activity. This chain is Protein phosphatase 1 regulatory inhibitor subunit PPP1R7 homolog, found in Arabidopsis thaliana (Mouse-ear cress).